Reading from the N-terminus, the 287-residue chain is Inorganic pyrophosphatase (287 aa).

Position 79 (Arg79) interacts with diphosphate. Mg(2+) is bound by residues Asp116, Asp121, and Asp153.

This sequence belongs to the PPase family. It depends on Mg(2+) as a cofactor.

It is found in the cytoplasm. It catalyses the reaction diphosphate + H2O = 2 phosphate + H(+). The polypeptide is Inorganic pyrophosphatase (IPP1) (Zygosaccharomyces bailii).